The primary structure comprises 440 residues: C-terminal-binding protein 1 (440 aa).

Residues Ser-100, 180–185 (IGLGRV), Asp-204, 237–243 (CGLNEHN), 264–266 (TAR), and Asp-290 each bind NAD(+). The active site involves Arg-266. Glu-295 is an active-site residue. His-315 serves as the catalytic Proton donor. 315-318 (HAAW) lines the NAD(+) pocket. The tract at residues 409–440 (HAHPAVAHPPHAPSPGQTIKPEADRDHPSDQL) is disordered. A compositionally biased stretch (basic and acidic residues) spans 429–440 (PEADRDHPSDQL).

Belongs to the D-isomer specific 2-hydroxyacid dehydrogenase family. The cofactor is NAD(+).

The protein resides in the nucleus. In terms of biological role, corepressor targeting diverse transcription regulators. Has dehydrogenase activity. This chain is C-terminal-binding protein 1 (ctbp1), found in Xenopus laevis (African clawed frog).